We begin with the raw amino-acid sequence, 1035 residues long: Potassium-transporting ATPase alpha chain 1 (1035 aa).

The interval M1–E41 is disordered. Residues M1–P98 lie on the Cytoplasmic side of the membrane. Y7 and Y10 each carry phosphotyrosine. Over residues M26–K40 the composition is skewed to basic residues. S27 is modified (phosphoserine). Residues E99–A119 form a helical membrane-spanning segment. Over A120 to Y142 the chain is Lumenal. Residues L143–F163 traverse the membrane as a helical segment. Residues K164–I299 lie on the Cytoplasmic side of the membrane. Residues E300–V319 form a helical membrane-spanning segment. Residues V320–A331 are Lumenal-facing. A helical transmembrane segment spans residues M332–A349. Residues V340, A341, V343, and E345 each contribute to the K(+) site. Residues T350–L783 lie on the Cytoplasmic side of the membrane. D387 serves as the catalytic 4-aspartylphosphate intermediate. Mg(2+) contacts are provided by D387 and T389. Phosphoserine occurs at positions 463 and 601. Residues D728 and D732 each coordinate Mg(2+). A helical transmembrane segment spans residues K784–I803. K(+) is bound at residue E797. Residues Y804 to L813 are Lumenal-facing. The chain crosses the membrane as a helical span at residues G814 to A834. E822 lines the K(+) pocket. Over Y835–R854 the chain is Cytoplasmic. S840 carries the phosphoserine modification. The chain crosses the membrane as a helical span at residues L855–F877. Residues T878–C929 lie on the Lumenal side of the membrane. The chain crosses the membrane as a helical span at residues Y930 to K949. Residues T950–N963 are Cytoplasmic-facing. Phosphoserine; by PKA is present on S954. Residues R964–Y982 form a helical membrane-spanning segment. Residues C983–F997 are Lumenal-facing. Residues Q998 to K1018 traverse the membrane as a helical segment. The Cytoplasmic portion of the chain corresponds to L1019–Y1035.

This sequence belongs to the cation transport ATPase (P-type) (TC 3.A.3) family. Type IIC subfamily. As to quaternary structure, the gastric H(+)/K(+) ATPase pump is composed of the catalytic alpha subunit ATP4A and the regulatory beta subunit ATP4B. Interacts (via the P-domain) with ATP4B (via N-terminus); this interaction stabilizes the lumenal-open E2 conformation state and prevents the reverse reaction of the transport cycle.

The protein resides in the apical cell membrane. It localises to the cell membrane. The enzyme catalyses K(+)(out) + ATP + H2O + H(+)(in) = K(+)(in) + ADP + phosphate + 2 H(+)(out). Functionally, the catalytic subunit of the gastric H(+)/K(+) ATPase pump which transports H(+) ions in exchange for K(+) ions across the apical membrane of parietal cells. Uses ATP as an energy source to pump H(+) ions to the gastric lumen while transporting K(+) ion from the lumen into the cell. Remarkably generates a million-fold proton gradient across the gastric parietal cell membrane, acidifying the gastric juice down to pH 1. Within a transport cycle, the transfer of a H(+) ion across the membrane is coupled to ATP hydrolysis and is associated with a transient phosphorylation that shifts the pump conformation from inward-facing (E1) to outward-facing state (E2). The release of the H(+) ion in the stomach lumen is followed by binding of K(+) ion converting the pump conformation back to the E1 state. The polypeptide is Potassium-transporting ATPase alpha chain 1 (ATP4A) (Oryctolagus cuniculus (Rabbit)).